The primary structure comprises 148 residues: 3-dehydroquinate dehydratase (148 aa).

Tyrosine 23 serves as the catalytic Proton acceptor. 3 residues coordinate substrate: asparagine 74, histidine 80, and aspartate 87. Histidine 100 (proton donor) is an active-site residue. Residues 101–102 and arginine 111 contribute to the substrate site; that span reads IS.

This sequence belongs to the type-II 3-dehydroquinase family. In terms of assembly, homododecamer.

It carries out the reaction 3-dehydroquinate = 3-dehydroshikimate + H2O. It functions in the pathway metabolic intermediate biosynthesis; chorismate biosynthesis; chorismate from D-erythrose 4-phosphate and phosphoenolpyruvate: step 3/7. In terms of biological role, catalyzes a trans-dehydration via an enolate intermediate. The chain is 3-dehydroquinate dehydratase from Thermoanaerobacter pseudethanolicus (strain ATCC 33223 / 39E) (Clostridium thermohydrosulfuricum).